The following is a 401-amino-acid chain: Argininosuccinate synthase (401 aa).

8 to 16 (AYSGGLDTS) lines the ATP pocket. Y85 provides a ligand contact to L-citrulline. G115 contacts ATP. L-aspartate-binding residues include T117, N121, and D122. N121 provides a ligand contact to L-citrulline. L-citrulline contacts are provided by R125, S173, S182, E258, and Y270.

It belongs to the argininosuccinate synthase family. Type 1 subfamily. As to quaternary structure, homotetramer.

It is found in the cytoplasm. The catalysed reaction is L-citrulline + L-aspartate + ATP = 2-(N(omega)-L-arginino)succinate + AMP + diphosphate + H(+). It participates in amino-acid biosynthesis; L-arginine biosynthesis; L-arginine from L-ornithine and carbamoyl phosphate: step 2/3. This is Argininosuccinate synthase from Staphylococcus saprophyticus subsp. saprophyticus (strain ATCC 15305 / DSM 20229 / NCIMB 8711 / NCTC 7292 / S-41).